The following is a 169-amino-acid chain: S-ribosylhomocysteine lyase (169 aa).

3 residues coordinate Fe cation: His-54, His-58, and Cys-128.

It belongs to the LuxS family. As to quaternary structure, homodimer. It depends on Fe cation as a cofactor.

It catalyses the reaction S-(5-deoxy-D-ribos-5-yl)-L-homocysteine = (S)-4,5-dihydroxypentane-2,3-dione + L-homocysteine. Its function is as follows. Involved in the synthesis of autoinducer 2 (AI-2) which is secreted by bacteria and is used to communicate both the cell density and the metabolic potential of the environment. The regulation of gene expression in response to changes in cell density is called quorum sensing. Catalyzes the transformation of S-ribosylhomocysteine (RHC) to homocysteine (HC) and 4,5-dihydroxy-2,3-pentadione (DPD). The chain is S-ribosylhomocysteine lyase from Shewanella putrefaciens (strain CN-32 / ATCC BAA-453).